A 221-amino-acid chain; its full sequence is MALALAALAAVEPACGTGYQQLQNEEEPGEREQTAGDAPPPYSSISAESAAYFDYKDESGFPKPPSYNVATTLPSYDEAERTKAEATIPLVPGRDEDFVGRDDFDDADQLRIGNDGIFMLTFFMAFLFNWIGFFLSFCLTTSAAGRYGAISGFGLSLIKWILIVRFSTYFPGYFDGQYWLWWVFLVLGFLLFLRGFINYAKVRKMPETFSNLPRTRVLFIY.

The residue at position 2 (A2) is an N-acetylalanine. Residues 2 to 41 are interaction with UBE2L3; it reads ALALAALAAVEPACGTGYQQLQNEEEPGEREQTAGDAPPP. Topologically, residues 2 to 116 are cytoplasmic; that stretch reads ALALAALAAV…ADQLRIGNDG (115 aa). The segment at 15–45 is disordered; sequence CGTGYQQLQNEEEPGEREQTAGDAPPPYSSI. 3 consecutive short sequence motifs (PPxY motif) follow at residues 39-42, 64-67, and 74-76; these read PPPY, PPSY, and PSY. An interaction with ITCH region spans residues 42-76; the sequence is YSSISAESAAYFDYKDESGFPKPPSYNVATTLPSY. Residues 117–137 form a helical membrane-spanning segment; the sequence is IFMLTFFMAFLFNWIGFFLSF. At 138–143 the chain is on the extracellular side; the sequence is CLTTSA. Residues 144-164 form a helical membrane-spanning segment; the sequence is AGRYGAISGFGLSLIKWILIV. The Cytoplasmic portion of the chain corresponds to 165-172; it reads RFSTYFPG. A helical transmembrane segment spans residues 173 to 193; that stretch reads YFDGQYWLWWVFLVLGFLLFL. Over 194 to 221 the chain is Extracellular; sequence RGFINYAKVRKMPETFSNLPRTRVLFIY.

As to quaternary structure, forms heterodimers with NDFIP2. Interacts with several E3 ubiquitin-protein ligases, including ITCH, NEDD4, NEDD4L and WWP2. The interaction with NEDD4, NEDD4L and ITCH leads to relocalization of these proteins to exosomes and eventually to exosomal secretion. Interacts with SR1402. Interacts with SLC11A2/DMT1. Interacts with PTEN. May interact with phosphorylated EGFR. Interacts with BRAT1. Interacts with KCNH2. Interacts with MAVS. Part of a complex containing ITCH, NDFIP1 and MAP3K7. Interacts (via N-terminus) with UBE2L3; the interaction mediates recruitment of UBE2L3 to ITCH. Post-translationally, ubiquitinated by NEDD4; mono-, di- and polyubiquitinated forms are detected. Ubiquitination regulates its degradation. In terms of processing, undergoes transient tyrosine phosphorylation following EGF stimulation, most probably by catalyzed by SRC. Phosphorylation SRC is enhanced in the presence of NDFIP2 which may act as a scaffold to recruit SRC to NDFIP1.

The protein resides in the endosome membrane. The protein localises to the golgi apparatus membrane. Its subcellular location is the synapse. It localises to the synaptosome. It is found in the cell projection. The protein resides in the dendrite. The protein localises to the secreted. Activates HECT domain-containing E3 ubiquitin-protein ligases, including NEDD4 and ITCH, and consequently modulates the stability of their targets. As a result, controls many cellular processes. Prevents chronic T-helper cell-mediated inflammation by activating ITCH and thus controlling JUNB degradation. Promotes pancreatic beta cell death through degradation of JUNB and inhibition of the unfolded protein response, leading to reduction of insulin secretion. Restricts the production of pro-inflammatory cytokines in effector Th17 T-cells by promoting ITCH-mediated ubiquitination degradation of RORC. Together with NDFIP2, limits the cytokine signaling and expansion of effector Th2 T-cells by promoting degradation of JAK1, probably by ITCH- and NEDD4L-mediated ubiquitination. Regulates peripheral T-cell tolerance to self and foreign antigens, forcing the exit of naive CD4+ T-cells from the cell cycle before they become effector T-cells. Negatively regulates RLR-mediated antiviral response by promoting SMURF1-mediated ubiquitination and subsequent degradation of MAVS. Negatively regulates KCNH2 potassium channel activity by decreasing its cell-surface expression and interfering with channel maturation through recruitment of NEDD4L to the Golgi apparatus where it mediates KCNH2 degradation. In cortical neurons, mediates the ubiquitination of the divalent metal transporter SLC11A2/DMT1 by NEDD4L, leading to its down-regulation and protection of the cells from cobalt and iron toxicity. Important for normal development of dendrites and dendritic spines in cortex. Enhances the ubiquitination of BRAT1 mediated by: NEDD4, NEDD4L and ITCH and is required for the nuclear localization of ubiquitinated BRAT1. Enhances the ITCH-mediated ubiquitination of MAP3K7 by recruiting E2 ubiquitin-conjugating enzyme UBE2L3 to ITCH. Modulates EGFR signaling through multiple pathways. In particular, may regulate the ratio of AKT1-to-MAPK8 signaling in response to EGF, acting on AKT1 probably through PTEN destabilization and on MAPK8 through ITCH-dependent MAP2K4 inactivation. As a result, may control cell growth rate. Inhibits cell proliferation by promoting PTEN nuclear localization and changing its signaling specificity. The protein is NEDD4 family-interacting protein 1 (Ndfip1) of Rattus norvegicus (Rat).